Consider the following 333-residue polypeptide: DnaJ homolog subfamily C member 25 homolog (333 aa).

The helical transmembrane segment at 8 to 28 (LVLLALLPTMALGLLEGLYCG) threads the bilayer. Positions 31 to 99 (NCYDVLGVTR…ESRTDYDYML (69 aa)) constitute a J domain. The helical transmembrane segment at 123–143 (VRVVIVVVLTIVSVIQYYSGW) threads the bilayer. The stretch at 158 to 208 (KYRNQALEIARDEIQEKIQKKGKNRMSKNDQRDELERIIRRVIEEKMDVKG) forms a coiled coil. A helical transmembrane segment spans residues 218–238 (VLWVQLIICPYTILSFIVWHA).

It belongs to the DNAJC25 family.

The protein resides in the membrane. The polypeptide is DnaJ homolog subfamily C member 25 homolog (Drosophila melanogaster (Fruit fly)).